A 90-amino-acid chain; its full sequence is MDGIKYAVFTDKSIQLLGKKQYTSNVESRSTRTEIKHWVELWNSYEMNSHRLPGKGRRMGPIMGHTMHYRRMIITLQSSYSIPPLRKKRT.

The tract at residues 1–46 is coded by first part of gene; that stretch reads MDGIKYAVFTDKSIQLLGKKQYTSNVESRSTRTEIKHWVELWNSYE. Residues 47-90 are coded by second part of gene; that stretch reads MNSHRLPGKGRRMGPIMGHTMHYRRMIITLQSSYSIPPLRKKRT.

It belongs to the universal ribosomal protein uL23 family. Part of the 50S ribosomal subunit.

It is found in the plastid. The protein resides in the chloroplast. Functionally, binds to 23S rRNA. In Spinacia oleracea (Spinach), this protein is Putative large ribosomal subunit protein uL23c (rpl23).